The sequence spans 439 residues: Damage-control phosphatase ARMT1 (439 aa).

Ala2 is modified (N-acetylalanine). Phosphoserine is present on Ser4. Lys40 carries the post-translational modification N6-acetyllysine. Residues Asp251 and Asn252 each contribute to the Mn(2+) site. Residue 251 to 252 (DN) participates in substrate binding. Glu256 and Asp289 together coordinate S-adenosyl-L-methionine. Residue Asp289 participates in Mn(2+) binding. Substrate-binding positions include 365–369 (DLNYR) and Lys402. The Subfamily III RTxK motif signature appears at 399–402 (RTLK).

The protein belongs to the damage-control phosphatase family. Sugar phosphate phosphatase III subfamily. Requires Mn(2+) as cofactor. It depends on Ni(2+) as a cofactor. In terms of processing, automethylated.

It carries out the reaction beta-D-fructose 1-phosphate + H2O = D-fructose + phosphate. The enzyme catalyses beta-D-fructose 6-phosphate = dihydroxyacetone + D-glyceraldehyde 3-phosphate. It catalyses the reaction L-glutamyl-[protein] + S-adenosyl-L-methionine = [protein]-L-glutamate 5-O-methyl ester + S-adenosyl-L-homocysteine. In terms of biological role, metal-dependent phosphatase that shows phosphatase activity against several substrates, including fructose-1-phosphate and fructose-6-phosphate. Its preference for fructose-1-phosphate, a strong glycating agent that causes DNA damage rather than a canonical yeast metabolite, suggests a damage-control function in hexose phosphate metabolism. Has also been shown to have O-methyltransferase activity that methylates glutamate residues of target proteins to form gamma-glutamyl methyl ester residues. Possibly methylates PCNA, suggesting it is involved in the DNA damage response. The chain is Damage-control phosphatase ARMT1 from Rattus norvegicus (Rat).